Here is a 468-residue protein sequence, read N- to C-terminus: V-type proton ATPase subunit S1 (468 aa).

A signal peptide spans 1–35; sequence MMAATAAAQVRAGTRWAPALCRMPWLPLMLVAAAA. Positions 36–228 are excised as a propeptide; that stretch reads ATSEQQVPLV…TAVRPSRVAR (193 aa). At 36 to 417 the chain is on the lumenal side; the sequence is ATSEQQVPLV…KKFSYASDCA (382 aa). Residues N167, N258, N271, N294, N301, N348, N355, and N404 are each glycosylated (N-linked (GlcNAc...) asparagine). C369 and C416 are disulfide-bonded. The chain crosses the membrane as a helical span at residues 418 to 438; the sequence is GFFSPGIWMGLLTSLFMLFIF. At 439–468 the chain is on the cytoplasmic side; it reads TYGLHMILSLKTMDRFDDHKGPTITLTQIV.

The protein belongs to the vacuolar ATPase subunit S1 family. In terms of assembly, accessory component of the multisubunit proton-transporting vacuolar (V)-ATPase protein pump. Interacts (via N-terminus) with ATP6AP2 (via N-terminus). Interacts with RNASEK. Interacts with TMEM106B (via C-terminus). In terms of processing, N-glycosylated.

The protein resides in the endoplasmic reticulum membrane. It localises to the endoplasmic reticulum-Golgi intermediate compartment membrane. The protein localises to the cytoplasmic vesicle. It is found in the secretory vesicle. Its subcellular location is the synaptic vesicle membrane. The protein resides in the clathrin-coated vesicle membrane. Its function is as follows. Accessory subunit of the proton-transporting vacuolar (V)-ATPase protein pump, which is required for luminal acidification of secretory vesicles. Guides the V-type ATPase into specialized subcellular compartments, such as neuroendocrine regulated secretory vesicles or the ruffled border of the osteoclast, thereby regulating its activity. Involved in membrane trafficking and Ca(2+)-dependent membrane fusion. May play a role in the assembly of the V-type ATPase complex. In aerobic conditions, involved in intracellular iron homeostasis, thus triggering the activity of Fe(2+) prolyl hydroxylase (PHD) enzymes, and leading to HIF1A hydroxylation and subsequent proteasomal degradation. In islets of Langerhans cells, may regulate the acidification of dense-core secretory granules. The chain is V-type proton ATPase subunit S1 (ATP6AP1) from Bos taurus (Bovine).